Here is a 174-residue protein sequence, read N- to C-terminus: ATP-dependent protease subunit HslV (174 aa).

T2 is an active-site residue. Na(+)-binding residues include G157, C160, and T163.

It belongs to the peptidase T1B family. HslV subfamily. In terms of assembly, a double ring-shaped homohexamer of HslV is capped on each side by a ring-shaped HslU homohexamer. The assembly of the HslU/HslV complex is dependent on binding of ATP.

The protein localises to the cytoplasm. The enzyme catalyses ATP-dependent cleavage of peptide bonds with broad specificity.. Its activity is regulated as follows. Allosterically activated by HslU binding. Protease subunit of a proteasome-like degradation complex believed to be a general protein degrading machinery. The chain is ATP-dependent protease subunit HslV from Yersinia enterocolitica serotype O:8 / biotype 1B (strain NCTC 13174 / 8081).